Consider the following 361-residue polypeptide: Phosphoserine aminotransferase (361 aa).

Residue R43 coordinates L-glutamate. Pyridoxal 5'-phosphate is bound by residues 77 to 78, W103, T153, D173, and Q196; that span reads AS. K197 is subject to N6-(pyridoxal phosphate)lysine. A pyridoxal 5'-phosphate-binding site is contributed by 238–239; that stretch reads NT.

This sequence belongs to the class-V pyridoxal-phosphate-dependent aminotransferase family. SerC subfamily. As to quaternary structure, homodimer. The cofactor is pyridoxal 5'-phosphate.

The protein localises to the cytoplasm. It catalyses the reaction O-phospho-L-serine + 2-oxoglutarate = 3-phosphooxypyruvate + L-glutamate. It carries out the reaction 4-(phosphooxy)-L-threonine + 2-oxoglutarate = (R)-3-hydroxy-2-oxo-4-phosphooxybutanoate + L-glutamate. The protein operates within amino-acid biosynthesis; L-serine biosynthesis; L-serine from 3-phospho-D-glycerate: step 2/3. Its pathway is cofactor biosynthesis; pyridoxine 5'-phosphate biosynthesis; pyridoxine 5'-phosphate from D-erythrose 4-phosphate: step 3/5. Functionally, catalyzes the reversible conversion of 3-phosphohydroxypyruvate to phosphoserine and of 3-hydroxy-2-oxo-4-phosphonooxybutanoate to phosphohydroxythreonine. The polypeptide is Phosphoserine aminotransferase (Pseudomonas fluorescens (strain SBW25)).